A 1161-amino-acid polypeptide reads, in one-letter code: MTLEIVRGFADRDFRSELLERIYEKYRIDPQARFFYIVPNHIKFSAEVDVLKKFGSLLGKNDQEAQAFSRLQVYSLSRLAWALTKERDQKTIISNQSVSILVGQVLRELPIEKLNIFARSARMPGFVANVAEQLLEIWRSGLTASEILPLHQFDDRLSEKIKVLALIETKILPSLKDYSLPDDALRNFATQISKIDLKNCNFYFEGFSGFTASELSLVKALISADRKTQLGKKSEIVFSLTGEQQSDQYGEGNLFYRANQLFKNEFSSARVWIVSNIRPLSESQLNFEQSWRELETQGFTSQKRSFPQTKIVVSSDQEHEIDFVARSIRQRLVDNPKLRAKDILVLAQRLDGYKNIIPKIFDRYDLPYFLDKDTRMSDHPLASLAENLLGSSNEFAYERIMKIFRTGLLSWQLEDNFQTALDYLENYLLANNPKEKNWRQEEFQLIQISDEQDLNDDHKIDRQINALINRMRLFIIKILDDFQEKFAKVENYHQAVKTLYNWLTDQQVDQVLLNQANDGDDRGQQTWKLLLSTLDEVDQLIGDKKYSQKDFLQILKDGFAAASFSGIPASLDQITVSESGIVQRNDFKALYFIDASDASLPAQTNSSSLIDDFDRLQLIDDFSKAQKPYYLQDTSRQEMTAENFRFYSSVLSATDSVTFSYSKLRLDGKQNELSPYLRRLSLKNVSDLKIEKIPDLPQSQADLVDYLGTANSSAAILSQTAQNFGEDFIDGLTDLLIKRNPYFQRILQALHYNNQPVTLRPELIKKLFGEDLRLSISQIEKYYSNPYEYFLQYGLRLKKRNQFTVDAALSGTYYHSIFEQVINRLIGKRTDFHDLSDQELKKLSQESAQNLIELPDFQILQSDDHFRAVARSLTDDVLLTLKLMHRANRLNNSRPIKTEAVFGKLSSDQQREQSLSGLDFTLANGRKIYLRGKVDRIDQQDLEHIFGTIIDYKSNGKVFDFRDAYVGTELQLLTYWLALSKNSSRIGINQPGGAVFVQIRNKPADISQALAHQIQLDQLIGDRAKQQVPDFQFHGILLDDQNYLANLQTVLAGQKAKYYNFGLTKKGQKTARSDLVSKEDLTVLLKHDEKKLVEAGNKIIHGEFPLYPIKKNEQRSALTYSDYTEIMNFDRNFGNQYNNLTRYPKNKSELISKMREEEGEN.

This sequence belongs to the helicase family. AddB/RexB type 2 subfamily. Heterodimer of AddA and RexB. Requires Mg(2+) as cofactor.

Its function is as follows. The heterodimer acts as both an ATP-dependent DNA helicase and an ATP-dependent, dual-direction single-stranded exonuclease. Recognizes the chi site generating a DNA molecule suitable for the initiation of homologous recombination. This subunit has 5' -&gt; 3' nuclease activity but not helicase activity. The protein is ATP-dependent helicase/deoxyribonuclease subunit B of Oenococcus oeni (strain ATCC BAA-331 / PSU-1).